The chain runs to 171 residues: Co-chaperone protein HscB (171 aa).

Positions 2 to 74 (DYFTLFGLPA…LTRAEYLLSL (73 aa)) constitute a J domain.

Belongs to the HscB family. In terms of assembly, interacts with HscA and stimulates its ATPase activity. Interacts with IscU.

Functionally, co-chaperone involved in the maturation of iron-sulfur cluster-containing proteins. Seems to help targeting proteins to be folded toward HscA. The protein is Co-chaperone protein HscB of Salmonella heidelberg (strain SL476).